Reading from the N-terminus, the 265-residue chain is 3-methyl-2-oxobutanoate hydroxymethyltransferase (265 aa).

Mg(2+)-binding residues include Asp-44 and Asp-83. Residues Asp-44–Ser-45, Asp-83, and Lys-113 each bind 3-methyl-2-oxobutanoate. Mg(2+) is bound at residue Glu-115. Residue Glu-183 is the Proton acceptor of the active site.

It belongs to the PanB family. In terms of assembly, homodecamer; pentamer of dimers. Mg(2+) is required as a cofactor.

Its subcellular location is the cytoplasm. The catalysed reaction is 3-methyl-2-oxobutanoate + (6R)-5,10-methylene-5,6,7,8-tetrahydrofolate + H2O = 2-dehydropantoate + (6S)-5,6,7,8-tetrahydrofolate. The protein operates within cofactor biosynthesis; (R)-pantothenate biosynthesis; (R)-pantoate from 3-methyl-2-oxobutanoate: step 1/2. Functionally, catalyzes the reversible reaction in which hydroxymethyl group from 5,10-methylenetetrahydrofolate is transferred onto alpha-ketoisovalerate to form ketopantoate. This Leptospira borgpetersenii serovar Hardjo-bovis (strain L550) protein is 3-methyl-2-oxobutanoate hydroxymethyltransferase.